We begin with the raw amino-acid sequence, 215 residues long: Nucleoside triphosphate pyrophosphatase (215 aa).

Catalysis depends on aspartate 80, which acts as the Proton acceptor.

Belongs to the Maf family. Requires a divalent metal cation as cofactor.

It is found in the cytoplasm. The enzyme catalyses a ribonucleoside 5'-triphosphate + H2O = a ribonucleoside 5'-phosphate + diphosphate + H(+). It carries out the reaction a 2'-deoxyribonucleoside 5'-triphosphate + H2O = a 2'-deoxyribonucleoside 5'-phosphate + diphosphate + H(+). Its function is as follows. Nucleoside triphosphate pyrophosphatase. May have a dual role in cell division arrest and in preventing the incorporation of modified nucleotides into cellular nucleic acids. The protein is Nucleoside triphosphate pyrophosphatase of Leifsonia xyli subsp. xyli (strain CTCB07).